Consider the following 384-residue polypeptide: Beta-ureidopropionase (384 aa).

The 273-residue stretch at 72-344 (VHVGLVQNRI…DGLLVAKLDL (273 aa)) folds into the CN hydrolase domain. Residue glutamate 119 is the Proton acceptor of the active site. Lysine 196 functions as the Proton donor in the catalytic mechanism. Catalysis depends on cysteine 233, which acts as the Nucleophile. The residue at position 378 (serine 378) is a Phosphoserine.

Belongs to the carbon-nitrogen hydrolase superfamily. BUP family. As to quaternary structure, homodimer, homotetramer, homooctamer; can also form higher homooligomers.

It is found in the cytoplasm. The enzyme catalyses 3-(carbamoylamino)propanoate + H2O + 2 H(+) = beta-alanine + NH4(+) + CO2. It carries out the reaction 3-(carbamoylamino)-2-methylpropanoate + H2O + 2 H(+) = (R)-3-amino-2-methylpropanoate + NH4(+) + CO2. It functions in the pathway amino-acid biosynthesis; beta-alanine biosynthesis. Catalyzes a late step in pyrimidine degradation. Converts N-carbamoyl-beta-alanine (3-ureidopropanoate) into beta-alanine, ammonia and carbon dioxide. Likewise, converts N-carbamoyl-beta-aminoisobutyrate (3-ureidoisobutyrate) into beta-aminoisobutyrate, ammonia and carbon dioxide. This Pongo abelii (Sumatran orangutan) protein is Beta-ureidopropionase (UPB1).